Reading from the N-terminus, the 63-residue chain is Serine protease inhibitor 3 (63 aa).

A signal peptide spans 1 to 23 (MAKLLAVFLVLLIAALVCEQALA). Disulfide bonds link cysteine 24–cysteine 39, cysteine 34–cysteine 52, and cysteine 37–cysteine 47. The Pacifastin domain occupies 24 to 55 (CTPGSRKYDGCNWCTCSSGGAWICTLKYCPPS).

The protein belongs to the protease inhibitor I19 family. In terms of tissue distribution, expressed in hemolymph, ovaries, testes and fat body of adults but are absent in the gut. Also present in larval hemolymph and fat body.

It localises to the secreted. Functionally, in vitro, active against alpha-chymotrypsin. This chain is Serine protease inhibitor 3, found in Schistocerca gregaria (Desert locust).